The following is a 729-amino-acid chain: Sodium-dependent neutral amino acid transporter B(0)AT2 (729 aa).

The Cytoplasmic portion of the chain corresponds to 1–69; sequence MPKNSKVVKR…ERPAWNSKLQ (69 aa). Ser25 and Ser55 each carry phosphoserine. The interval 42 to 61 is disordered; it reads DVQEEKDTDAEDGSEADDER. Residues 43-59 are compositionally biased toward acidic residues; the sequence is VQEEKDTDAEDGSEADD. 3 helical membrane-spanning segments follow: residues 70–90, 98–117, and 142–162; these read YILA…FPYL, AYLL…LFFL, and GIGF…NVII. Residues 163–225 lie on the Extracellular side of the membrane; that stretch reads GWTLFYFSQS…SSISDSGGLN (63 aa). The N-linked (GlcNAc...) asparagine glycan is linked to Asn187. 2 consecutive transmembrane segments (helical) span residues 226–244 and 253–270; these read WKMT…LAMI and IMYF…CFLI. Asn276 is a glycosylation site (N-linked (GlcNAc...) asparagine). The next 2 helical transmembrane spans lie at 306–323 and 335–356; these read VFFA…FSSY and VLVS…FAVL. Residues 357-452 lie on the Extracellular side of the membrane; it reads GFKANIVNEK…FIAFTEAMTH (96 aa). 2 N-linked (GlcNAc...) asparagine glycosylation sites follow: Asn383 and Asn394. 5 consecutive transmembrane segments (helical) span residues 453–472, 496–514, 530–550, 571–592, and 620–642; these read FPAS…NLGL, ILTV…IFVQ, TLPL…VYGI, YMWK…IVNM, and VVCF…IRRC. At 643–729 the chain is on the cytoplasmic side; it reads NLIDDSSGNL…DMPDMPESDL (87 aa). Residues Ser687, Ser699, and Ser701 each carry the phosphoserine modification.

It belongs to the sodium:neurotransmitter symporter (SNF) (TC 2.A.22) family. SLC6A15 subfamily. Significant expressed in brain, lung and kidney. In brain, mainly expressed int the cortex, the cerebellum and the brain stem.

It is found in the membrane. The catalysed reaction is L-pipecolate(in) + Na(+)(in) = L-pipecolate(out) + Na(+)(out). The enzyme catalyses L-leucine(in) + Na(+)(in) = L-leucine(out) + Na(+)(out). It carries out the reaction L-isoleucine(in) + Na(+)(in) = L-isoleucine(out) + Na(+)(out). It catalyses the reaction L-methionine(in) + Na(+)(in) = L-methionine(out) + Na(+)(out). The catalysed reaction is L-proline(in) + Na(+)(in) = L-proline(out) + Na(+)(out). The enzyme catalyses L-alanine(in) + Na(+)(in) = L-alanine(out) + Na(+)(out). It carries out the reaction L-asparagine(in) + Na(+)(in) = L-asparagine(out) + Na(+)(out). It catalyses the reaction L-valine(in) + Na(+)(in) = L-valine(out) + Na(+)(out). The catalysed reaction is L-cysteine(in) + Na(+)(in) = L-cysteine(out) + Na(+)(out). The enzyme catalyses L-glutamine(in) + Na(+)(in) = L-glutamine(out) + Na(+)(out). It carries out the reaction L-serine(in) + Na(+)(in) = L-serine(out) + Na(+)(out). It catalyses the reaction L-threonine(in) + Na(+)(in) = L-threonine(out) + Na(+)(out). The catalysed reaction is L-phenylalanine(in) + Na(+)(in) = L-phenylalanine(out) + Na(+)(out). Functions as a sodium-dependent neutral amino acid transporter. Exhibits preference for methionine and for the branched-chain amino acids, particularly leucine, valine and isoleucine. Can also transport low-affinity substrates such as alanine, phenylalanine, glutamine and pipecolic acid. Mediates the saturable, pH-sensitive and electrogenic cotransport of proline and sodium ions with a stoichiometry of 1:1. May have a role as transporter for neurotransmitter precursors into neurons. In contrast to other members of the neurotransmitter transporter family, does not appear to be chloride-dependent. This Mus musculus (Mouse) protein is Sodium-dependent neutral amino acid transporter B(0)AT2 (Slc6a15).